We begin with the raw amino-acid sequence, 592 residues long: UPF0329 protein ECU01_0110/ECU01_1500/ECU08_0040 (592 aa).

2 stretches are compositionally biased toward basic and acidic residues: residues 306–339 (RQRR…SKEK) and 353–362 (EAKEEEKKES). The tract at residues 306–404 (RQRRREREIE…RKRYKIHRRV (99 aa)) is disordered.

The protein belongs to the UPF0329 family.

This is UPF0329 protein ECU01_0110/ECU01_1500/ECU08_0040 from Encephalitozoon cuniculi (strain GB-M1) (Microsporidian parasite).